A 445-amino-acid chain; its full sequence is Argininosuccinate synthase (445 aa).

ATP is bound by residues 17-25 (AFSGGLDTS) and A43. An L-citrulline-binding site is contributed by Y99. Residues G129 and T131 each contribute to the ATP site. 3 residues coordinate L-aspartate: T131, N135, and D136. N135 contacts L-citrulline. An ATP-binding site is contributed by D136. R139 and S192 together coordinate L-citrulline. ATP is bound at residue D194. L-citrulline-binding residues include T201, E203, and E280.

This sequence belongs to the argininosuccinate synthase family. Type 2 subfamily. Homotetramer.

The protein resides in the cytoplasm. The catalysed reaction is L-citrulline + L-aspartate + ATP = 2-(N(omega)-L-arginino)succinate + AMP + diphosphate + H(+). The protein operates within amino-acid biosynthesis; L-arginine biosynthesis; L-arginine from L-ornithine and carbamoyl phosphate: step 2/3. This is Argininosuccinate synthase from Rhodopseudomonas palustris (strain BisB5).